Reading from the N-terminus, the 122-residue chain is Large ribosomal subunit protein uL14 (122 aa).

Belongs to the universal ribosomal protein uL14 family. In terms of assembly, part of the 50S ribosomal subunit. Forms a cluster with proteins L3 and L19. In the 70S ribosome, L14 and L19 interact and together make contacts with the 16S rRNA in bridges B5 and B8.

Binds to 23S rRNA. Forms part of two intersubunit bridges in the 70S ribosome. This is Large ribosomal subunit protein uL14 from Bordetella avium (strain 197N).